The sequence spans 597 residues: Probable translation initiation factor IF-2 (597 aa).

The 218-residue stretch at 4–221 (IRQPIIAVLG…LIAGLSQKYL (218 aa)) folds into the tr-type G domain. The G1 stretch occupies residues 13–20 (GHVDHGKT). Residue 13–20 (GHVDHGKT) participates in GTP binding. A G2 region spans residues 38-42 (GITQH). Residues 77 to 80 (DTPG) are G3. GTP is bound by residues 77-81 (DTPGH) and 131-134 (NKID). Residues 131-134 (NKID) form a G4 region. Residues 199–201 (SAK) are G5.

This sequence belongs to the TRAFAC class translation factor GTPase superfamily. Classic translation factor GTPase family. IF-2 subfamily.

Function in general translation initiation by promoting the binding of the formylmethionine-tRNA to ribosomes. Seems to function along with eIF-2. This chain is Probable translation initiation factor IF-2, found in Thermococcus onnurineus (strain NA1).